A 200-amino-acid polypeptide reads, in one-letter code: Holliday junction branch migration complex subunit RuvA (200 aa).

The domain I stretch occupies residues 1 to 65 (MYEYIKGTLT…ETEHVLYGFS (65 aa)). Residues 66-144 (SRAERECFRL…TLMPLYLEEP (79 aa)) are domain II. A flexible linker region spans residues 145-149 (VVPSS). Residues 150 to 200 (TANSSFKEGIGALMNLGFSRLAADRMMTEAVKELSEEASVAELLPIALRKS) are domain III.

It belongs to the RuvA family. Homotetramer. Forms an RuvA(8)-RuvB(12)-Holliday junction (HJ) complex. HJ DNA is sandwiched between 2 RuvA tetramers; dsDNA enters through RuvA and exits via RuvB. An RuvB hexamer assembles on each DNA strand where it exits the tetramer. Each RuvB hexamer is contacted by two RuvA subunits (via domain III) on 2 adjacent RuvB subunits; this complex drives branch migration. In the full resolvosome a probable DNA-RuvA(4)-RuvB(12)-RuvC(2) complex forms which resolves the HJ.

It is found in the cytoplasm. Functionally, the RuvA-RuvB-RuvC complex processes Holliday junction (HJ) DNA during genetic recombination and DNA repair, while the RuvA-RuvB complex plays an important role in the rescue of blocked DNA replication forks via replication fork reversal (RFR). RuvA specifically binds to HJ cruciform DNA, conferring on it an open structure. The RuvB hexamer acts as an ATP-dependent pump, pulling dsDNA into and through the RuvAB complex. HJ branch migration allows RuvC to scan DNA until it finds its consensus sequence, where it cleaves and resolves the cruciform DNA. This Chlamydia trachomatis serovar L2 (strain ATCC VR-902B / DSM 19102 / 434/Bu) protein is Holliday junction branch migration complex subunit RuvA.